We begin with the raw amino-acid sequence, 302 residues long: N-acetyl-D-glucosamine kinase (302 aa).

Residues 4–11 (GFDVGGTK) and 133–140 (GFGGGLVF) each bind ATP. Zn(2+) contacts are provided by histidine 157, cysteine 177, cysteine 179, and cysteine 184.

Belongs to the ROK (NagC/XylR) family. NagK subfamily.

It catalyses the reaction N-acetyl-D-glucosamine + ATP = N-acetyl-D-glucosamine 6-phosphate + ADP + H(+). It functions in the pathway cell wall biogenesis; peptidoglycan recycling. In terms of biological role, catalyzes the phosphorylation of N-acetyl-D-glucosamine (GlcNAc) derived from cell-wall degradation, yielding GlcNAc-6-P. In Aliivibrio salmonicida (strain LFI1238) (Vibrio salmonicida (strain LFI1238)), this protein is N-acetyl-D-glucosamine kinase.